Reading from the N-terminus, the 183-residue chain is Adenylate kinase (183 aa).

7–15 (GVAGVGKTT) contacts ATP.

Belongs to the archaeal adenylate kinase family.

It localises to the cytoplasm. The catalysed reaction is AMP + ATP = 2 ADP. This Thermoplasma acidophilum (strain ATCC 25905 / DSM 1728 / JCM 9062 / NBRC 15155 / AMRC-C165) protein is Adenylate kinase (adkA).